The chain runs to 983 residues: UPF0746 protein DDB_G0280809 (983 aa).

The segment covering Met1–Asp21 has biased composition (basic and acidic residues). The tract at residues Met1–Ile26 is disordered. An SAP domain is found at Ser42–Phe76. Residues His391–Thr413 are disordered. Over residues Thr392–Thr413 the composition is skewed to low complexity.

It belongs to the UPF0746 family.

This Dictyostelium discoideum (Social amoeba) protein is UPF0746 protein DDB_G0280809.